We begin with the raw amino-acid sequence, 346 residues long: UDP-3-O-acylglucosamine N-acyltransferase (346 aa).

The active-site Proton acceptor is the His-240.

Belongs to the transferase hexapeptide repeat family. LpxD subfamily. As to quaternary structure, homotrimer.

It catalyses the reaction a UDP-3-O-[(3R)-3-hydroxyacyl]-alpha-D-glucosamine + a (3R)-hydroxyacyl-[ACP] = a UDP-2-N,3-O-bis[(3R)-3-hydroxyacyl]-alpha-D-glucosamine + holo-[ACP] + H(+). It participates in bacterial outer membrane biogenesis; LPS lipid A biosynthesis. Catalyzes the N-acylation of UDP-3-O-acylglucosamine using 3-hydroxyacyl-ACP as the acyl donor. Is involved in the biosynthesis of lipid A, a phosphorylated glycolipid that anchors the lipopolysaccharide to the outer membrane of the cell. This Bacteroides fragilis (strain ATCC 25285 / DSM 2151 / CCUG 4856 / JCM 11019 / LMG 10263 / NCTC 9343 / Onslow / VPI 2553 / EN-2) protein is UDP-3-O-acylglucosamine N-acyltransferase.